Reading from the N-terminus, the 286-residue chain is Polyamine aminopropyltransferase (286 aa).

Residues 2-237 (DLWFSEVHTP…GYWLFGFASK (236 aa)) enclose the PABS domain. Gln31 is a binding site for S-methyl-5'-thioadenosine. Asp86 is a binding site for spermidine. Residues Glu106 and 137-138 (NG) each bind S-methyl-5'-thioadenosine. The active-site Proton acceptor is Asp155.

The protein belongs to the spermidine/spermine synthase family. As to quaternary structure, homodimer or homotetramer.

It is found in the cytoplasm. The catalysed reaction is S-adenosyl 3-(methylsulfanyl)propylamine + putrescine = S-methyl-5'-thioadenosine + spermidine + H(+). It participates in amine and polyamine biosynthesis; spermidine biosynthesis; spermidine from putrescine: step 1/1. Catalyzes the irreversible transfer of a propylamine group from the amino donor S-adenosylmethioninamine (decarboxy-AdoMet) to putrescine (1,4-diaminobutane) to yield spermidine. The polypeptide is Polyamine aminopropyltransferase (Streptococcus pneumoniae serotype 4 (strain ATCC BAA-334 / TIGR4)).